The chain runs to 160 residues: Cytochrome b6-f complex subunit 4 (160 aa).

3 helical membrane-spanning segments follow: residues 36 to 56, 95 to 115, and 127 to 147; these read LLYT…GLAV, LLGI…PFIE, and PIAM…GVAA.

It belongs to the cytochrome b family. PetD subfamily. As to quaternary structure, the 4 large subunits of the cytochrome b6-f complex are cytochrome b6, subunit IV (17 kDa polypeptide, PetD), cytochrome f and the Rieske protein, while the 4 small subunits are PetG, PetL, PetM and PetN. The complex functions as a dimer.

The protein localises to the cellular thylakoid membrane. In terms of biological role, component of the cytochrome b6-f complex, which mediates electron transfer between photosystem II (PSII) and photosystem I (PSI), cyclic electron flow around PSI, and state transitions. This Prochlorothrix hollandica protein is Cytochrome b6-f complex subunit 4.